The primary structure comprises 342 residues: Dihydroorotate dehydrogenase (quinone) (342 aa).

Residues 65–69 (AGLDK) and threonine 89 contribute to the FMN site. A substrate-binding site is contributed by lysine 69. 114–118 (NRMGF) serves as a coordination point for substrate. FMN-binding residues include asparagine 142 and asparagine 175. Residue asparagine 175 coordinates substrate. Catalysis depends on serine 178, which acts as the Nucleophile. Asparagine 180 is a binding site for substrate. Positions 220 and 248 each coordinate FMN. Residue 249 to 250 (NT) coordinates substrate. FMN contacts are provided by residues glycine 271, glycine 300, and 321-322 (YT).

It belongs to the dihydroorotate dehydrogenase family. Type 2 subfamily. Monomer. The cofactor is FMN.

The protein localises to the cell membrane. It catalyses the reaction (S)-dihydroorotate + a quinone = orotate + a quinol. It functions in the pathway pyrimidine metabolism; UMP biosynthesis via de novo pathway; orotate from (S)-dihydroorotate (quinone route): step 1/1. Its function is as follows. Catalyzes the conversion of dihydroorotate to orotate with quinone as electron acceptor. The chain is Dihydroorotate dehydrogenase (quinone) from Burkholderia pseudomallei (strain K96243).